The primary structure comprises 111 residues: Succinate dehydrogenase assembly factor 1B, mitochondrial (111 aa).

It belongs to the complex I LYR family. SDHAF1 subfamily. In terms of assembly, interacts with the iron-sulfur protein subunit within the SDH catalytic dimer.

Its subcellular location is the mitochondrion matrix. Functionally, plays an essential role in the assembly of succinate dehydrogenase (SDH), an enzyme complex (also referred to as respiratory complex II) that is a component of both the tricarboxylic acid (TCA) cycle and the mitochondrial electron transport chain, and which couples the oxidation of succinate to fumarate with the reduction of ubiquinone (coenzyme Q) to ubiquinol. Promotes maturation of the iron-sulfur protein subunit of the SDH catalytic dimer, protecting it from the deleterious effects of oxidants. May act together with SDHAF3. This chain is Succinate dehydrogenase assembly factor 1B, mitochondrial, found in Dictyostelium discoideum (Social amoeba).